Consider the following 447-residue polypeptide: Glucose-6-phosphate isomerase (447 aa).

Catalysis depends on E289, which acts as the Proton donor. Active-site residues include H310 and K424.

It belongs to the GPI family.

It is found in the cytoplasm. It carries out the reaction alpha-D-glucose 6-phosphate = beta-D-fructose 6-phosphate. Its pathway is carbohydrate biosynthesis; gluconeogenesis. The protein operates within carbohydrate degradation; glycolysis; D-glyceraldehyde 3-phosphate and glycerone phosphate from D-glucose: step 2/4. Functionally, catalyzes the reversible isomerization of glucose-6-phosphate to fructose-6-phosphate. This chain is Glucose-6-phosphate isomerase, found in Parabacteroides distasonis (strain ATCC 8503 / DSM 20701 / CIP 104284 / JCM 5825 / NCTC 11152).